The sequence spans 693 residues: Elongation factor G (693 aa).

The tr-type G domain maps to 8-282; sequence EKTRNIGIMA…AVLDYLPSPL (275 aa). GTP-binding positions include 17–24, 81–85, and 135–138; these read AHVDAGKT, DTPGH, and NKMD.

It belongs to the TRAFAC class translation factor GTPase superfamily. Classic translation factor GTPase family. EF-G/EF-2 subfamily.

The protein localises to the cytoplasm. Catalyzes the GTP-dependent ribosomal translocation step during translation elongation. During this step, the ribosome changes from the pre-translocational (PRE) to the post-translocational (POST) state as the newly formed A-site-bound peptidyl-tRNA and P-site-bound deacylated tRNA move to the P and E sites, respectively. Catalyzes the coordinated movement of the two tRNA molecules, the mRNA and conformational changes in the ribosome. This is Elongation factor G from Enterococcus faecalis (strain ATCC 700802 / V583).